We begin with the raw amino-acid sequence, 273 residues long: Proteasome subunit beta type-10 (273 aa).

Met-1 is modified (N-acetylmethionine). Positions 1 to 39 are cleaved as a propeptide — removed in mature form; it reads MLKQAVEHRGGFSFENCQRNASLEHVLPGLRVPLARKTG. Catalysis depends on Thr-40, which acts as the Nucleophile. Ser-230 is subject to Phosphoserine.

This sequence belongs to the peptidase T1B family. The 26S proteasome consists of a 20S proteasome core and two 19S regulatory subunits. The 20S proteasome core is composed of 28 subunits that are arranged in four stacked rings, resulting in a barrel-shaped structure. The two end rings are each formed by seven alpha subunits, and the two central rings are each formed by seven beta subunits. The catalytic chamber with the active sites is on the inside of the barrel. Component of the immunoproteasome, where it displaces the equivalent housekeeping subunit PSMB7. Component of the spermatoproteasome, a form of the proteasome specifically found in testis. Autocleaved. The resulting N-terminal Thr residue of the mature subunit is responsible for the nucleophile proteolytic activity.

It is found in the cytoplasm. The protein localises to the nucleus. It carries out the reaction Cleavage of peptide bonds with very broad specificity.. The proteasome is a multicatalytic proteinase complex which is characterized by its ability to cleave peptides with Arg, Phe, Tyr, Leu, and Glu adjacent to the leaving group at neutral or slightly basic pH. The proteasome has an ATP-dependent proteolytic activity. This subunit is involved in antigen processing to generate class I binding peptides. The chain is Proteasome subunit beta type-10 (Psmb10) from Rattus norvegicus (Rat).